The chain runs to 167 residues: NADH-quinone oxidoreductase subunit B (167 aa).

[4Fe-4S] cluster is bound by residues cysteine 48, cysteine 49, cysteine 113, and cysteine 143.

This sequence belongs to the complex I 20 kDa subunit family. As to quaternary structure, NDH-1 is composed of 14 different subunits. Subunits NuoB, C, D, E, F, and G constitute the peripheral sector of the complex. Requires [4Fe-4S] cluster as cofactor.

The protein resides in the cell membrane. It catalyses the reaction a quinone + NADH + 5 H(+)(in) = a quinol + NAD(+) + 4 H(+)(out). In terms of biological role, NDH-1 shuttles electrons from NADH, via FMN and iron-sulfur (Fe-S) centers, to quinones in the respiratory chain. Couples the redox reaction to proton translocation (for every two electrons transferred, four hydrogen ions are translocated across the cytoplasmic membrane), and thus conserves the redox energy in a proton gradient. This is NADH-quinone oxidoreductase subunit B from Wolbachia pipientis subsp. Culex pipiens (strain wPip).